We begin with the raw amino-acid sequence, 160 residues long: Large ribosomal subunit protein uL13 (160 aa).

The protein belongs to the universal ribosomal protein uL13 family. As to quaternary structure, part of the 50S ribosomal subunit.

Its function is as follows. This protein is one of the early assembly proteins of the 50S ribosomal subunit, although it is not seen to bind rRNA by itself. It is important during the early stages of 50S assembly. The protein is Large ribosomal subunit protein uL13 of Orientia tsutsugamushi (strain Ikeda) (Rickettsia tsutsugamushi).